The following is a 442-amino-acid chain: MSAAQGWDRNRRRGGGAAGGGGGGSGAGGGSGGNGGRGTGQLNRFVQLSGRPHLPGKKKIRWDPVRRRFIQSCPIIRIPNRFLRGHRPPPARSGHRCVADNTNLYVFGGYNPDYDESGGPDNEDYPLFRELWRYHFATGVWHQMGTDGYMPRELASMSLVLHGNNLLVFGGTGIPFGESNGNDVHVCNVKYKRWALLSCRGKKPSRIYGQAMAIINGSLYVFGGTTGYIYSTDLHKLDLNTREWTQLKPNNLSCDLPEERYRHEIAHDGQRIYILGGGTSWTAYSLNKIHAYNLETNAWEEIATKPHEKIGFPAARRCHSCVQIKNDVFICGGYNGEVILGDIWKLNLQTFQWVKLPATMPEPVYFHCAAVTPAGCMYIHGGVVNIHENKRTGSLFKIWLVVPSLLELAWEKLLAAFPNLANLSRTQLLHLGLTQGLIERLK.

Residues 1–58 (MSAAQGWDRNRRRGGGAAGGGGGGSGAGGGSGGNGGRGTGQLNRFVQLSGRPHLPGKK) form a disordered region. At Arg13 the chain carries Omega-N-methylarginine. Positions 15–39 (GGAAGGGGGGSGAGGGSGGNGGRGT) are enriched in gly residues. Kelch repeat units follow at residues 87–154 (RPPP…PREL), 155–198 (ASMS…ALLS), 199–260 (CRGK…PEER), 261–319 (YRHE…RRCH), 320–364 (SCVQ…PEPV), and 365–403 (YFHCAAVTPAGCMYIHGGVVNIHENKRTGSLFKIWLVVP). The interaction with CUL2 stretch occupies residues 401–442 (VVPSLLELAWEKLLAAFPNLANLSRTQLLHLGLTQGLIERLK).

Belongs to the KLHDC10 family. Component of a CRL2 E3 ubiquitin-protein ligase complex, also named ECS (Elongin BC-CUL2/5-SOCS-box protein) complex, composed of CUL2, Elongin BC (ELOB and ELOC), RBX1 and substrate-specific adapter KLHDC10. Interacts (via the 6 Kelch repeats) with PPP5C.

It localises to the nucleus. The protein resides in the cytoplasm. It functions in the pathway protein modification; protein ubiquitination. Its function is as follows. Substrate-recognition component of a Cul2-RING (CRL2) E3 ubiquitin-protein ligase complex of the DesCEND (destruction via C-end degrons) pathway, which recognizes a C-degron located at the extreme C-terminus of target proteins, leading to their ubiquitination and degradation. The C-degron recognized by the DesCEND pathway is usually a motif of less than ten residues and can be present in full-length proteins, truncated proteins or proteolytically cleaved forms. The CRL2(KLHDC10) complex specifically recognizes proteins with a proline-glycine (Pro-Gly) or an alanine tail (CAT tail) at the C-terminus, leading to their ubiquitination and degradation. The CRL2(KLHDC10) complex is involved in the ribosome-associated quality control (RQC) pathway, which mediates the extraction of incompletely synthesized nascent chains from stalled ribosomes: CRL2(KLHDC10) acts downstream of NEMF and recognizes CAT tails associated with stalled nascent chains, leading to their ubiquitination and degradation. Participates in the oxidative stress-induced cell death through MAP3K5 activation. Inhibits PPP5C phosphatase activity on MAP3K5. Acts as a regulator of necroptosis. This is Kelch domain-containing protein 10 (KLHDC10) from Bos taurus (Bovine).